The sequence spans 217 residues: Outer-membrane lipoprotein LolB (217 aa).

A signal peptide spans 1 to 20 (MSKALRTLALSGLVLVGLSA). Cysteine 21 carries the N-palmitoyl cysteine lipid modification. The S-diacylglycerol cysteine moiety is linked to residue cysteine 21.

It belongs to the LolB family. Monomer.

Its subcellular location is the cell outer membrane. Its function is as follows. Plays a critical role in the incorporation of lipoproteins in the outer membrane after they are released by the LolA protein. This chain is Outer-membrane lipoprotein LolB, found in Xanthomonas oryzae pv. oryzae (strain MAFF 311018).